The following is a 316-amino-acid chain: Protoheme IX farnesyltransferase (316 aa).

9 helical membrane passes run 34-54, 55-75, 95-115, 118-138, 155-175, 182-202, 228-250, 254-273, and 287-307; these read VMSL…GHIN, PFIG…SGAL, IPAG…LSAF, IILG…TIFF, IVIG…CVTG, IVLF…LALF, IVIY…FASL, AFAT…VLRM, and FAFS…DYAI.

This sequence belongs to the UbiA prenyltransferase family. Protoheme IX farnesyltransferase subfamily.

The protein resides in the cell inner membrane. The catalysed reaction is heme b + (2E,6E)-farnesyl diphosphate + H2O = Fe(II)-heme o + diphosphate. The protein operates within porphyrin-containing compound metabolism; heme O biosynthesis; heme O from protoheme: step 1/1. Converts heme B (protoheme IX) to heme O by substitution of the vinyl group on carbon 2 of heme B porphyrin ring with a hydroxyethyl farnesyl side group. The polypeptide is Protoheme IX farnesyltransferase (Rhizobium meliloti (strain 1021) (Ensifer meliloti)).